The sequence spans 287 residues: MRLIVVSGHSGAGKSIALRVLEDLGYYCVDNLPVNLLDAFVHSIADSKQNVAVSIDIRNIPKKLKELTGTLEQLKTELDVTVLFLDANKETLLKRYSETRRIHPLSLGGQSLSLDQAIEREKEILTPLKAHADLILNSSGQSLHELSETVRMRVEGRDRKGLVMVFESFGFKYGLPSDADYVFDVRFLPNPHWEPALRPLTGLDAPIAAFLEQHQSVLSLKYQIESFIETWLPLLEKNNRSYLTVAIGCTGGKHRSVYLTQQIGEYFADKGHQVQIRHTSLEKNAKE.

8-15 (GHSGAGKS) is a binding site for ATP. Residue 56 to 59 (DIRN) participates in GTP binding.

It belongs to the RapZ-like family.

Its function is as follows. Displays ATPase and GTPase activities. This is Nucleotide-binding protein VP2673 from Vibrio parahaemolyticus serotype O3:K6 (strain RIMD 2210633).